Reading from the N-terminus, the 215-residue chain is MSKVYDWFEERLEIQAIADDITSKYVPPHVNIFYCLGGITLTCFLVQVATGFAMTFYYRPTVTEAFASVQYIMTEANFGWLIRSVHRWSASMMVLMMILHVFRVYLTGGFKKPRELTWVTGVVLAVLTASFGVTGYSLPWDQIGYWAVKIVTGVPDAIPVIGSPLVELLRGSASVGQSTLTRFYSLHTFVLPLLTAVFMLMHFPMIRKQGISGPL.

The chain crosses the membrane as a helical span at residues 32-52; that stretch reads IFYCLGGITLTCFLVQVATGF. Residue cysteine 35 coordinates heme c. The heme b site is built by histidine 86 and histidine 100. 3 helical membrane-spanning segments follow: residues 90–110, 116–136, and 186–206; these read ASMMVLMMILHVFRVYLTGGF, LTWVTGVVLAVLTASFGVTGY, and LHTFVLPLLTAVFMLMHFPMI. Heme b contacts are provided by histidine 187 and histidine 202.

It belongs to the cytochrome b family. PetB subfamily. The 4 large subunits of the cytochrome b6-f complex are cytochrome b6, subunit IV (17 kDa polypeptide, PetD), cytochrome f and the Rieske protein, while the 4 small subunits are PetG, PetL, PetM and PetN. The complex functions as a dimer. Heme b is required as a cofactor. The cofactor is heme c.

It localises to the plastid. The protein resides in the chloroplast thylakoid membrane. Component of the cytochrome b6-f complex, which mediates electron transfer between photosystem II (PSII) and photosystem I (PSI), cyclic electron flow around PSI, and state transitions. The chain is Cytochrome b6 from Solanum bulbocastanum (Wild potato).